A 711-amino-acid polypeptide reads, in one-letter code: MKQLFATTSRGFEELLKVELTELGAQEAKVVQGGVHYQADDETLYRTLLWSRLASRILFPLIETKIYSDLDLYAAVSGFNWLAQFDERVTFFVDFNGTNQEIRHTQFGAMRVKDGIVDYFERQGKARPDVDKIQPDVRIHAYLNRENLVISLDLSGEALHLRGYREDAGQAPLRETLAAAIVMRSGWQAGSPLVDPMCGSGTLLIEAAQIEAKIAPQLYRLHWGFDFWKAHNQSAWEKVKNEAIELAEEKQREIQPHFYGFDLDHRVLKKAQKNAQNAGVSHLIKWQQADVAALKNPRLNEVGTVICNPPYGERLGTTPALIALYSVFGQRLKKEFCGWNVSVFSSESTLLDCLRMRASRQFKAKNGPLDCVQKNYQVSERKSDAITDEKELEFNRTSEVAPDFANRLQKNIKKISKWAKQQELDAYRLYDADLPEYNLAVDRYADYIVVQEYAAPKNIDENKARQRLLDAVTATLQVTGVETNKLILKVRQKQKGTNQYEKLANKGEYFYVNEYGTQLWVNLTDYLDTGLFLDHRLTRKMIGELAKGKDFLNLFAYTGSATVHAALGGAKSTTTVDMSNTYLNWAEQNLILNDIEGKQHKLIQADCLQWLEKCDRQFDLIFVDPPTFSNSKRMEESWDVQRDHVKLMSNLKRVLSNNGTIVFSNNKRGFKMNLVALEELGLSAVEISHKTLPLDFERNKQIHNCWMIQHI.

Residues 43 to 154 (TLYRTLLWSR…RENLVISLDL (112 aa)) enclose the THUMP domain.

It belongs to the methyltransferase superfamily. RlmKL family.

It localises to the cytoplasm. It carries out the reaction guanosine(2445) in 23S rRNA + S-adenosyl-L-methionine = N(2)-methylguanosine(2445) in 23S rRNA + S-adenosyl-L-homocysteine + H(+). The catalysed reaction is guanosine(2069) in 23S rRNA + S-adenosyl-L-methionine = N(2)-methylguanosine(2069) in 23S rRNA + S-adenosyl-L-homocysteine + H(+). In terms of biological role, specifically methylates the guanine in position 2445 (m2G2445) and the guanine in position 2069 (m7G2069) of 23S rRNA. The chain is Ribosomal RNA large subunit methyltransferase K/L from Haemophilus influenzae (strain PittGG).